We begin with the raw amino-acid sequence, 236 residues long: Urease accessory protein UreG (236 aa).

Residues 1-26 (MHDHSLHSGHDHGLGPGSFHDRGAPH) form a disordered region. 42–49 (GPVGSGKT) is a binding site for GTP.

This sequence belongs to the SIMIBI class G3E GTPase family. UreG subfamily. In terms of assembly, homodimer. UreD, UreF and UreG form a complex that acts as a GTP-hydrolysis-dependent molecular chaperone, activating the urease apoprotein by helping to assemble the nickel containing metallocenter of UreC. The UreE protein probably delivers the nickel.

Its subcellular location is the cytoplasm. In terms of biological role, facilitates the functional incorporation of the urease nickel metallocenter. This process requires GTP hydrolysis, probably effectuated by UreG. The protein is Urease accessory protein UreG of Anaeromyxobacter sp. (strain Fw109-5).